Reading from the N-terminus, the 55-residue chain is Chromatin protein Cren7 (55 aa).

The protein belongs to the Cren7 family. In terms of assembly, monomer. Post-translationally, methylated at multiple sites, to varying extents.

It is found in the chromosome. It localises to the cytoplasm. In terms of biological role, a chromatin protein, binds double-stranded DNA without sequence specificity. Constrains negative DNA supercoils. This is Chromatin protein Cren7 from Ignicoccus hospitalis (strain KIN4/I / DSM 18386 / JCM 14125).